We begin with the raw amino-acid sequence, 526 residues long: Thymocyte selection-associated high mobility group box protein TOX (526 aa).

Disordered stretches follow at residues 138–178 (MPDI…PHGQ) and 192–264 (GLNM…PQKP). Positions 192–203 (GLNMGGSNVPHN) are enriched in polar residues. Residues 209-220 (GSKSATPSPSSS) show a composition bias toward low complexity. Basic and acidic residues predominate over residues 228–245 (DTSKINGGEKRPASDMGK). The Nuclear localization signal motif lies at 237–256 (KRPASDMGKKPKTPKKKKKK). Residues 246–256 (KPKTPKKKKKK) show a composition bias toward basic residues. The segment at residues 261-329 (PQKPVSAYAL…EYLKQLAAYR (69 aa)) is a DNA-binding region (HMG box).

It belongs to the high motility group (HMG) box superfamily. Interacts with HBO1 complex composed at least of KAT7/HBO1, ING4, MEAF6, and JADE2; this complex is involved in histone acetylation. Interacts with DNMT1, LEO1, PAF1, SAP130 and SIN3A; these interactors regulate chromatin remodeling. Interacts with an array of proteins involved in RNA processing and translation and DNA replication. In terms of tissue distribution, expressed in NK cells. Highly expressed in tumor-infiltrating CD8-positive T cells (at protein level).

The protein resides in the nucleus. In terms of biological role, transcriptional regulator with a major role in neural stem cell commitment and corticogenesis as well as in lymphoid cell development and lymphoid tissue organogenesis. Binds to GC-rich DNA sequences in the proximity of transcription start sites and may alter chromatin structure, modifying access of transcription factors to DNA. During cortical development, controls the neural stem cell pool by inhibiting the switch from proliferative to differentiating progenitors. Beyond progenitor cells, promotes neurite outgrowth in newborn neurons migrating to reach the cortical plate. May activate or repress critical genes for neural stem cell fate such as SOX2, EOMES and ROBO2. Plays an essential role in the development of lymphoid tissue-inducer (LTi) cells, a subset necessary for the formation of secondary lymphoid organs: peripheral lymph nodes and Peyer's patches. Acts as a developmental checkpoint and regulates thymocyte positive selection toward T cell lineage commitment. Required for the development of various T cell subsets, including CD4-positive helper T cells, CD8-positive cytotoxic T cells, regulatory T cells and CD1D-dependent natural killer T (NKT) cells. Required for the differentiation of common lymphoid progenitors (CMP) to innate lymphoid cells (ILC). May regulate the NOTCH-mediated gene program, promoting differentiation of the ILC lineage. Required at the progenitor phase of NK cell development in the bone marrow to specify NK cell lineage commitment. Upon chronic antigen stimulation, diverts T cell development by promoting the generation of exhaustive T cells, while suppressing effector and memory T cell programming. May regulate the expression of genes encoding inhibitory receptors such as PDCD1 and induce the exhaustion program, to prevent the overstimulation of T cells and activation-induced cell death. This Homo sapiens (Human) protein is Thymocyte selection-associated high mobility group box protein TOX.